The following is a 253-amino-acid chain: Chloride intracellular channel protein 4 (253 aa).

The residue at position 2 (Ala2) is an N-acetylalanine. The segment at 2 to 101 is required for insertion into the membrane; it reads ALSMPLNGLK…EEFLEEVLCP (100 aa). A Phosphoserine modification is found at Ser4. Position 24 is an N6-acetyllysine (Lys24). Residues 35-38 carry the G-site motif; that stretch reads CPFS. Residues 37-57 form a helical membrane-spanning segment; that stretch reads FSQRLFMILWLKGVVFSVTTV. Positions 81 to 244 constitute a GST C-terminal domain; that stretch reads NSEVKTDVNK…PSDKEVEIAY (164 aa). Position 130 is an N6-acetyllysine (Lys130). Ser132, Ser167, and Ser236 each carry phosphoserine. Phosphotyrosine is present on Tyr244.

The protein belongs to the chloride channel CLIC family. In terms of assembly, monomer. Interacts with HRH30. Interacts with AKAP9. In terms of tissue distribution, detected in blood vessels in the retina (at protein level). Expressed to the greatest extent in vivo in heart, lung, liver, kidney, and skin.

Its subcellular location is the cytoplasm. The protein localises to the cytoskeleton. The protein resides in the microtubule organizing center. It is found in the centrosome. It localises to the cytoplasmic vesicle membrane. Its subcellular location is the nucleus. The protein localises to the cell membrane. The protein resides in the mitochondrion. It is found in the cell junction. It catalyses the reaction chloride(in) = chloride(out). It carries out the reaction thiocyanate(in) = thiocyanate(out). The catalysed reaction is nitrate(in) = nitrate(out). The enzyme catalyses iodide(out) = iodide(in). It catalyses the reaction bromide(in) = bromide(out). It carries out the reaction fluoride(in) = fluoride(out). The catalysed reaction is choline(out) = choline(in). In the soluble state, catalyzes glutaredoxin-like thiol disulfide exchange reactions with reduced glutathione as electron donor. Can insert into membranes and form voltage-dependent multi-ion conductive channels. Membrane insertion seems to be redox-regulated and may occur only under oxidizing conditions. Has alternate cellular functions like a potential role in angiogenesis or in maintaining apical-basolateral membrane polarity during mitosis and cytokinesis. Could also promote endothelial cell proliferation and regulate endothelial morphogenesis (tubulogenesis). Promotes cell-surface expression of HRH3. The protein is Chloride intracellular channel protein 4 (Clic4) of Mus musculus (Mouse).